The chain runs to 423 residues: Glutamyl-tRNA(Gln) amidotransferase subunit A (423 aa).

The segment at 1 to 20 is disordered; it reads MSHNAFITEETIEPTDDGPL. The span at 10–19 shows a compositional bias: acidic residues; the sequence is ETIEPTDDGP. Catalysis depends on charge relay system residues K28 and S103. The tract at residues 75 to 108 is disordered; that stretch reads EFGMGTTTETSAFGPTENPAAEGRVPGGSSGGSA. The Acyl-ester intermediate role is filled by S127. The disordered stretch occupies residues 183-206; that stretch reads DERDGTTREPPAGQPTYADAADGD.

It belongs to the amidase family. GatA subfamily. As to quaternary structure, heterotrimer of A, B and C subunits.

The catalysed reaction is L-glutamyl-tRNA(Gln) + L-glutamine + ATP + H2O = L-glutaminyl-tRNA(Gln) + L-glutamate + ADP + phosphate + H(+). Allows the formation of correctly charged Gln-tRNA(Gln) through the transamidation of misacylated Glu-tRNA(Gln) in organisms which lack glutaminyl-tRNA synthetase. The reaction takes place in the presence of glutamine and ATP through an activated gamma-phospho-Glu-tRNA(Gln). The protein is Glutamyl-tRNA(Gln) amidotransferase subunit A of Natronomonas pharaonis (strain ATCC 35678 / DSM 2160 / CIP 103997 / JCM 8858 / NBRC 14720 / NCIMB 2260 / Gabara) (Halobacterium pharaonis).